We begin with the raw amino-acid sequence, 586 residues long: Acyl-coenzyme A synthetase ACSM3, mitochondrial (586 aa).

Residues 1–27 constitute a mitochondrion transit peptide; sequence MLACVTMKMLRHAKCFQRLAIFGSVRA. Lys73 and Lys106 each carry N6-succinyllysine. At Lys157 the chain carries N6-acetyllysine. ATP-binding positions include 235–243, 374–379, Asp461, Arg476, and Lys572; these read TSGTSGYPK and EGYGQT.

The protein belongs to the ATP-dependent AMP-binding enzyme family. Mg(2+) serves as cofactor. The cofactor is Mn(2+).

It is found in the mitochondrion. The protein resides in the mitochondrion matrix. It carries out the reaction a medium-chain fatty acid + ATP + CoA = a medium-chain fatty acyl-CoA + AMP + diphosphate. It catalyses the reaction propanoate + ATP + CoA = propanoyl-CoA + AMP + diphosphate. The catalysed reaction is butanoate + ATP + CoA = butanoyl-CoA + AMP + diphosphate. The enzyme catalyses 2-methylpropanoate + ATP + CoA = 2-methylpropanoyl-CoA + AMP + diphosphate. It carries out the reaction 2-methylbutanoate + ATP + CoA = 2-methylbutanoyl-CoA + AMP + diphosphate. It catalyses the reaction octanoate + ATP + CoA = octanoyl-CoA + AMP + diphosphate. Catalyzes the activation of fatty acids by CoA to produce an acyl-CoA, the first step in fatty acid metabolism. Capable of activating medium-chain fatty acids with a preference for isobutyrate among fatty acids with 2-6 carbon atoms. This chain is Acyl-coenzyme A synthetase ACSM3, mitochondrial (ACSM3), found in Pongo abelii (Sumatran orangutan).